The chain runs to 286 residues: Ribosome-inactivating protein beta-momorcharin (286 aa).

An N-terminal signal peptide occupies residues 1–23; that stretch reads MVKCLLLSFLIIAIFIGVPTAKG. The N-linked (GlcNAc...) asparagine glycan is linked to Asn74. Residues Tyr93, Tyr132, Glu181, and Arg184 contribute to the active site.

The protein belongs to the ribosome-inactivating protein family. Type 1 RIP subfamily. Bound to a branched hexasaccharide.

It catalyses the reaction Endohydrolysis of the N-glycosidic bond at one specific adenosine on the 28S rRNA.. Irreversibly relaxes supercoiled DNA and catalyzes double-stranded breakage. Also acts as a ribosome inactivating protein. This Momordica charantia (Bitter gourd) protein is Ribosome-inactivating protein beta-momorcharin (MAP30).